Here is a 195-residue protein sequence, read N- to C-terminus: Thymidine kinase (195 aa).

ATP contacts are provided by residues 15 to 22 (GSMFSGKS) and 88 to 91 (DEVQ). The Proton acceptor role is filled by glutamate 89. Position 120 (phenylalanine 120) interacts with substrate. Zn(2+) is bound by residues cysteine 145 and cysteine 148. Residues 170–174 (IILVG) and tyrosine 179 each bind substrate. Zn(2+) is bound by residues cysteine 183 and cysteine 186.

The protein belongs to the thymidine kinase family. In terms of assembly, homotetramer.

It localises to the cytoplasm. It catalyses the reaction thymidine + ATP = dTMP + ADP + H(+). This Bacillus cereus (strain ATCC 14579 / DSM 31 / CCUG 7414 / JCM 2152 / NBRC 15305 / NCIMB 9373 / NCTC 2599 / NRRL B-3711) protein is Thymidine kinase.